We begin with the raw amino-acid sequence, 72 residues long: Disintegrin cotiarin (72 aa).

The Disintegrin domain maps to 1–72 (EAGEECDCGA…SADCPRNRFH (72 aa)). 6 disulfides stabilise this stretch: C6-C21, C8-C16, C15-C38, C29-C35, C34-C59, and C47-C66. Positions 51-53 (RGD) match the Cell attachment site motif. Residues 51–72 (RGDNPDDRCTGQSADCPRNRFH) are disordered.

It belongs to the venom metalloproteinase (M12B) family. P-II subfamily. P-IIa sub-subfamily. Monomer. Expressed by the venom gland.

Its subcellular location is the secreted. Functionally, inhibits fibrinogen interaction with platelets. Acts by binding to alpha-IIb/beta-3 (ITGA2B/ITGB3) on the platelet surface and inhibits aggregation induced by ADP, thrombin, platelet-activating factor and collagen. The sequence is that of Disintegrin cotiarin from Bothrops cotiara (Cotiara).